The sequence spans 2684 residues: Teneurin-1 (2684 aa).

Disordered regions lie at residues 1–37 (MFQH…HDYT), 127–156 (TTSS…PTYS), and 170–204 (GTNQ…KKFD). Over 1–216 (MFQHRTTNAQ…SDTCSRWPSK (216 aa)) the chain is Cytoplasmic. Residues 11-24 (GPPPNRPMPRPPAG) show a composition bias toward pro residues. Residues 127 to 136 (TTSSTLSPAS) show a composition bias toward low complexity. Residues 217-237 (WNILLAAALLVALFVICILLF) traverse the membrane as a helical segment. Residues 238-2684 (RAPNYVYTQP…VHSWKFRKSE (2447 aa)) are Extracellular-facing. EGF-like domains are found at residues 463-499 (TGRT…KECE) and 501-534 (RHNW…EACE). 6 disulfides stabilise this stretch: Cys467–Cys476, Cys472–Cys487, Cys489–Cys498, Cys505–Cys516, Cys510–Cys522, and Cys524–Cys533. The segment at 576-614 (PQAQSPPRRGQEPTESSKTRKAQVKPTPTSEKKKESREL) is disordered. 2 stretches are compositionally biased toward basic and acidic residues: residues 584–593 (RGQEPTESSK) and 605–614 (SEKKKESREL). EGF-like domains follow at residues 650–684 (DSVD…SNCT) and 716–753 (AIDG…VDCS). 6 cysteine pairs are disulfide-bonded: Cys654-Cys666, Cys659-Cys672, Cys674-Cys683, Cys720-Cys730, Cys724-Cys741, and Cys743-Cys752. NHL repeat units follow at residues 1276-1317 (DSCG…IDTT), 1334-1378 (RTCA…VVHD), 1398-1441 (SASA…VRKL), and 1470-1513 (AVSL…VSAR).

It belongs to the tenascin family. Teneurin subfamily. Post-translationally, probably proteolytically processed to generate a N-terminal intracellular domain. As to expression, isoform 1 is mainly expressed in organs derived from the mesoderm, including the pharynx, vulva muscles, gonad distal tip cells, intestine and several tail neurons. Isoform 2 is mainly expressed in the organs derived from the ectoderm, including hypodermal cells, head ganglion neurons and tail neurons (at protein level).

Its subcellular location is the nucleus. It is found in the cell membrane. It localises to the membrane. In terms of biological role, plays a role in the gonadal basement membrane maintenance and/or adhesion early in development. Contributes to the guidance of pharyngeal neurons. The protein is Teneurin-1 (ten-1) of Caenorhabditis elegans.